Reading from the N-terminus, the 188-residue chain is PRA1 family protein 3 (188 aa).

Met-1 carries the post-translational modification N-acetylmethionine. The Cytoplasmic segment spans residues 1–35 (MDVNIAPLRAWDDFFPGSDRFARPDFRDISKWNNR). 2 helical membrane-spanning segments follow: residues 36–56 (VVSNLLYYQTNYLVVAAMMIS) and 57–77 (IVGFLSPFNMILGGIVVVLVF). Over 78-93 (TGFVWAAHNKDVLRRM) the chain is Cytoplasmic. 2 helical membrane-spanning segments follow: residues 94-114 (KKRYPTTFVMVVMLASYFLIS) and 115-135 (MFGGVMVFVFGITFPLLLMFI). The interval 103 to 117 (MVVMLASYFLISMFG) is required for homodimer formation and heterodimer formation with ARL6IP1. Residues 136 to 188 (HASLRLRNLKNKLENKMEGIGLKRTPMGIVLDALEQQEEGINRLTDYISKVKE) lie on the Cytoplasmic side of the membrane. The segment at 136-188 (HASLRLRNLKNKLENKMEGIGLKRTPMGIVLDALEQQEEGINRLTDYISKVKE) is targeting to endoplasmic reticulum membrane.

The protein belongs to the PRA1 family. In terms of assembly, homodimer. Heterodimer with ARL6IP1. Forms multimers. Interacts with ARL6. Interacts with prenylated RAB1A and RAB3A. Interacts with SLC1A1/EAAC1. Interacts with RTN2 (via first transmembrane domain). Does not interact with VAMP1, VAMP2 or VAMP3.

Its subcellular location is the endoplasmic reticulum membrane. The protein localises to the cell membrane. The protein resides in the cytoplasm. It localises to the cytoskeleton. In terms of biological role, regulates intracellular concentrations of taurine and glutamate. Negatively modulates SLC1A1/EAAC1 glutamate transport activity by decreasing its affinity for glutamate in a PKC activity-dependent manner. Plays a role in the retention of SLC1A1/EAAC1 in the endoplasmic reticulum. The protein is PRA1 family protein 3 (ARL6IP5) of Homo sapiens (Human).